The primary structure comprises 314 residues: DegV domain-containing protein XCC3382 (314 aa).

The region spanning 3–307 (IGIVVDSACD…KGALAVAFAA (305 aa)) is the DegV domain. The hexadecanoate site is built by threonine 63 and serine 96.

May bind long-chain fatty acids, such as palmitate, and may play a role in lipid transport or fatty acid metabolism. This Xanthomonas campestris pv. campestris (strain ATCC 33913 / DSM 3586 / NCPPB 528 / LMG 568 / P 25) protein is DegV domain-containing protein XCC3382.